A 301-amino-acid polypeptide reads, in one-letter code: NAD kinase 2 (301 aa).

The active-site Proton acceptor is the D77. NAD(+)-binding positions include D77–G78, R82, N151–E152, R162, D181, and T192–S197.

It belongs to the NAD kinase family. Requires a divalent metal cation as cofactor.

It localises to the cytoplasm. The enzyme catalyses NAD(+) + ATP = ADP + NADP(+) + H(+). Involved in the regulation of the intracellular balance of NAD and NADP, and is a key enzyme in the biosynthesis of NADP. Catalyzes specifically the phosphorylation on 2'-hydroxyl of the adenosine moiety of NAD to yield NADP. The polypeptide is NAD kinase 2 (Streptomyces avermitilis (strain ATCC 31267 / DSM 46492 / JCM 5070 / NBRC 14893 / NCIMB 12804 / NRRL 8165 / MA-4680)).